A 479-amino-acid chain; its full sequence is Glutamate--tRNA ligase 2 (479 aa).

The 'HIGH' region signature appears at 18–28; that stretch reads PSPTGFLHIGG. Positions 244-248 match the 'KMSKS' region motif; it reads KLSKR. Lys247 contributes to the ATP binding site.

It belongs to the class-I aminoacyl-tRNA synthetase family. Glutamate--tRNA ligase type 1 subfamily. Monomer.

It localises to the cytoplasm. The enzyme catalyses tRNA(Glu) + L-glutamate + ATP = L-glutamyl-tRNA(Glu) + AMP + diphosphate. Catalyzes the attachment of glutamate to tRNA(Glu) in a two-step reaction: glutamate is first activated by ATP to form Glu-AMP and then transferred to the acceptor end of tRNA(Glu). The polypeptide is Glutamate--tRNA ligase 2 (Maricaulis maris (strain MCS10) (Caulobacter maris)).